The sequence spans 593 residues: Aspartate--tRNA ligase (593 aa).

Residue Glu-180 coordinates L-aspartate. The aspartate stretch occupies residues 204–207 (QIFK). Arg-226 lines the L-aspartate pocket. Residues 226-228 (RDE) and Gln-235 contribute to the ATP site. His-453 contributes to the L-aspartate binding site. Glu-487 contacts ATP. Arg-494 is a binding site for L-aspartate. 539–542 (GLDR) contacts ATP.

This sequence belongs to the class-II aminoacyl-tRNA synthetase family. Type 1 subfamily. Homodimer.

The protein resides in the cytoplasm. The catalysed reaction is tRNA(Asp) + L-aspartate + ATP = L-aspartyl-tRNA(Asp) + AMP + diphosphate. Functionally, catalyzes the attachment of L-aspartate to tRNA(Asp) in a two-step reaction: L-aspartate is first activated by ATP to form Asp-AMP and then transferred to the acceptor end of tRNA(Asp). This Clostridium botulinum (strain Kyoto / Type A2) protein is Aspartate--tRNA ligase.